Here is a 283-residue protein sequence, read N- to C-terminus: Pantothenate synthetase (283 aa).

Position 31–38 (31–38) interacts with ATP; sequence MGALHDGH. Histidine 38 (proton donor) is an active-site residue. Glutamine 62 contacts (R)-pantoate. Beta-alanine is bound at residue glutamine 62. Residue 148 to 151 coordinates ATP; sequence GKKD. Glutamine 154 provides a ligand contact to (R)-pantoate. Residues valine 177 and 185–188 contribute to the ATP site; that span reads KSSR.

It belongs to the pantothenate synthetase family. In terms of assembly, homodimer.

It localises to the cytoplasm. It catalyses the reaction (R)-pantoate + beta-alanine + ATP = (R)-pantothenate + AMP + diphosphate + H(+). It participates in cofactor biosynthesis; (R)-pantothenate biosynthesis; (R)-pantothenate from (R)-pantoate and beta-alanine: step 1/1. Catalyzes the condensation of pantoate with beta-alanine in an ATP-dependent reaction via a pantoyl-adenylate intermediate. This is Pantothenate synthetase from Staphylococcus aureus (strain bovine RF122 / ET3-1).